The primary structure comprises 159 residues: Putative 4-hydroxy-4-methyl-2-oxoglutarate aldolase (159 aa).

Substrate contacts are provided by residues 74–77 (GDNL) and R96. D97 is a binding site for a divalent metal cation.

Belongs to the class II aldolase/RraA-like family. Homotrimer. It depends on a divalent metal cation as a cofactor.

The catalysed reaction is 4-hydroxy-4-methyl-2-oxoglutarate = 2 pyruvate. The enzyme catalyses oxaloacetate + H(+) = pyruvate + CO2. Functionally, catalyzes the aldol cleavage of 4-hydroxy-4-methyl-2-oxoglutarate (HMG) into 2 molecules of pyruvate. Also contains a secondary oxaloacetate (OAA) decarboxylase activity due to the common pyruvate enolate transition state formed following C-C bond cleavage in the retro-aldol and decarboxylation reactions. The sequence is that of Putative 4-hydroxy-4-methyl-2-oxoglutarate aldolase from Bacillus cereus (strain ZK / E33L).